Here is a 792-residue protein sequence, read N- to C-terminus: Serine/threonine-protein kinase Nek4 (792 aa).

A Protein kinase domain is found at 6–261 (YCYMRVVGRG…VRSILRQPYI (256 aa)). Residues 12-20 (VGRGSYGEV) and K35 each bind ATP. D131 (proton acceptor) is an active-site residue. T165 is modified (phosphothreonine; by autocatalysis). Disordered stretches follow at residues 329 to 358 (QEKP…NTGE), 379 to 515 (ANAG…LPSY), 527 to 611 (QQND…SITQ), and 628 to 657 (LSED…TNEM). Residues S340 and S343 each carry the phosphoserine modification. Polar residues-rich tracts occupy residues 412–421 (QGNTKSSDQP), 456–467 (DQVTGIIENQDS), 473–484 (QPHSSMSEPSLS), 496–505 (AHSGTKSQFQ), and 541–551 (VNSSRTSSTAS). N6-methyllysine is present on K566. A compositionally biased stretch (polar residues) spans 602–611 (RFSSDCSITQ). Over residues 641-657 (DKSDGDSREGKSHTNEM) the composition is skewed to basic and acidic residues. S675 carries the post-translational modification Phosphoserine.

It belongs to the protein kinase superfamily. NEK Ser/Thr protein kinase family. NIMA subfamily. Requires Mn(2+) as cofactor. Expressed ubiquitously among various organs and is up-regulated in the testis.

It is found in the cytoplasm. Its subcellular location is the cell projection. The protein resides in the cilium. It carries out the reaction L-seryl-[protein] + ATP = O-phospho-L-seryl-[protein] + ADP + H(+). It catalyses the reaction L-threonyl-[protein] + ATP = O-phospho-L-threonyl-[protein] + ADP + H(+). In terms of biological role, required for normal entry into proliferative arrest after a limited number of cell divisions, also called replicative senescence. Required for normal cell cycle arrest in response to double-stranded DNA damage. Protein kinase that seems to act exclusively upon threonine residues. The polypeptide is Serine/threonine-protein kinase Nek4 (Nek4) (Mus musculus (Mouse)).